A 171-amino-acid chain; its full sequence is Cation channel sperm-associated auxiliary subunit TMEM249 (171 aa).

At 1–2 (ML) the chain is on the cytoplasmic side. The chain crosses the membrane as a helical span at residues 3-17 (FIICLVFISCNVLRE). The Extracellular segment spans residues 18–28 (VKYQETWCFPA). Residues 29-40 (YGMVIGLWLMLS) form a helical membrane-spanning segment. The Cytoplasmic portion of the chain corresponds to 41-171 (SIPQRRLVLN…TKSSVNDLDV (131 aa)).

As to quaternary structure, component of the CatSper complex or CatSpermasome composed of the core pore-forming members CATSPER1, CATSPER2, CATSPER3 and CATSPER4 as well as auxiliary members CATSPERB, CATSPERG2, CATSPERD, CATSPERE, CATSPERZ, C2CD6/CATSPERT, SLCO6C1, TMEM249, TMEM262 and EFCAB9. HSPA1 may be an additional auxiliary complex member. The core complex members CATSPER1, CATSPER2, CATSPER3 and CATSPER4 form a heterotetrameric channel. The auxiliary CATSPERB, CATSPERG2, CATSPERD and CATSPERE subunits form a pavilion-like structure over the pore which stabilizes the complex through interactions with CATSPER4, CATSPER3, CATSPER1 and CATSPER2 respectively. SLCO6C1 interacts with CATSPERE and TMEM262/CATSPERH interacts with CATSPERB, further stabilizing the complex. C2CD6/CATSPERT interacts at least with CATSPERD and is required for targeting the CatSper complex in the flagellar membrane.

It is found in the cell projection. It localises to the cilium. The protein localises to the flagellum membrane. In terms of biological role, auxiliary component of the CatSper complex, a complex involved in sperm cell hyperactivation. The protein is Cation channel sperm-associated auxiliary subunit TMEM249 of Mus musculus (Mouse).